Here is an 81-residue protein sequence, read N- to C-terminus: Translational regulator CsrA (81 aa).

It belongs to the CsrA/RsmA family. Homodimer; the beta-strands of each monomer intercalate to form a hydrophobic core, while the alpha-helices form wings that extend away from the core.

It is found in the cytoplasm. A translational regulator that binds mRNA to regulate translation initiation and/or mRNA stability. Usually binds in the 5'-UTR at or near the Shine-Dalgarno sequence preventing ribosome-binding, thus repressing translation. Its main target seems to be the major flagellin gene, while its function is anatagonized by FliW. This chain is Translational regulator CsrA, found in Borreliella burgdorferi (strain ATCC 35210 / DSM 4680 / CIP 102532 / B31) (Borrelia burgdorferi).